The primary structure comprises 470 residues: Uronate isomerase (470 aa).

This sequence belongs to the metallo-dependent hydrolases superfamily. Uronate isomerase family.

It catalyses the reaction D-glucuronate = D-fructuronate. The catalysed reaction is aldehydo-D-galacturonate = keto-D-tagaturonate. The protein operates within carbohydrate metabolism; pentose and glucuronate interconversion. The sequence is that of Uronate isomerase from Sphingopyxis alaskensis (strain DSM 13593 / LMG 18877 / RB2256) (Sphingomonas alaskensis).